We begin with the raw amino-acid sequence, 137 residues long: Large ribosomal subunit protein uL16 (137 aa).

Basic residues predominate over residues 1–13 (MLQPSRRKYRKEQ). Positions 1 to 22 (MLQPSRRKYRKEQKGRNTGLAT) are disordered.

It belongs to the universal ribosomal protein uL16 family. As to quaternary structure, part of the 50S ribosomal subunit.

Its function is as follows. Binds 23S rRNA and is also seen to make contacts with the A and possibly P site tRNAs. The polypeptide is Large ribosomal subunit protein uL16 (Azoarcus sp. (strain BH72)).